A 1166-amino-acid chain; its full sequence is Reverse gyrase (1166 aa).

Residues 1–40 (MINVMYKNSCPNCGGDISADRLLNGLPCETCLPYINGIDG) form an RG N-terminal-type zinc finger. Zn(2+) contacts are provided by Cys10, Cys13, Cys28, and Cys31. ATP contacts are provided by residues Gln92 and 109–116 (APTGLGKT). One can recognise a Helicase ATP-binding domain in the interval 96–285 (LRRLVSNQSF…ALRLLTGFEP (190 aa)). Residues 190–193 (DDAD) carry the DEAD box motif. The interval 576–1166 (FNISTGLLIV…VNPLKSEQNV (591 aa)) is topoisomerase I. The region spanning 580 to 743 (TGLLIVESPT…NIYRITYHEI (164 aa)) is the Toprim domain. Glu586 is a Mg(2+) binding site. The RG C-terminal-type zinc-finger motif lies at 662-689 (IKKCLDCNKTFSIASDKCPYCGSTNVQT). Zn(2+) contacts are provided by Cys665, Cys668, Cys679, and Cys682. Asp712 lines the Mg(2+) pocket. Positions 759-1157 (NTNLVMSQIV…EIFSEISTLV (399 aa)) constitute a Topo IA-type catalytic domain. The O-(5'-phospho-DNA)-tyrosine intermediate role is filled by Tyr903.

In the N-terminal section; belongs to the DEAD box helicase family. DDVD subfamily. It in the C-terminal section; belongs to the type IA topoisomerase family. Monomer. The cofactor is Zn(2+). It depends on Mg(2+) as a cofactor.

It is found in the cytoplasm. The enzyme catalyses ATP + H2O = ADP + phosphate + H(+). Its activity is regulated as follows. Inhibited by UV light-induced lesions; substrate is completely cleaved but a nicked form accumulates, suggesting the reaction is blocked between the cleavage and ligation steps. Inhibited by actinomycin D; substrate DNA remains negatively supercoiled in this case. Activity is stimulated by SSB from S.solfataricus strain P2. Positive supercoiling is inhibited by Sul7d (also called Sso7d) from S.solfataricus strain MT4; SSB from S.solfataricus strain P2 relieves this inhibition. Its function is as follows. Modifies the topological state of DNA by introducing positive supercoils in an ATP-dependent process. Increases the linking number in steps of +1. In vitro requires high concentrations to supercoil negatively supercoiled DNA, relaxes plasmid DNA first; DNA single-strand binding protein (SSB) from S.solfataricus strain P2 stimulates positive supercoiling. SSB stimulates DNA-binding by reverse gyrase, and thus all subsequent steps. Binds to single-stranded DNA, transiently cleaves and then rejoins the ends, introducing a positive supercoil in the process. The scissile phosphodiester is attacked by the catalytic tyrosine of the enzyme, resulting in the formation of a DNA-(5'-phosphotyrosyl)-enzyme intermediate. May be involved in DNA damage response. Probably involved in rewinding DNA strands in regions of the chromosome that have opened up to allow replication, transcription, DNA repair and/or for DNA protection. The polypeptide is Reverse gyrase (Saccharolobus shibatae (strain ATCC 51178 / DSM 5389 / JCM 8931 / NBRC 15437 / B12) (Sulfolobus shibatae)).